The primary structure comprises 450 residues: 3-phosphoshikimate 1-carboxyvinyltransferase (450 aa).

3-phosphoshikimate contacts are provided by Lys-23, Ser-24, and Arg-28. Lys-23 serves as a coordination point for phosphoenolpyruvate. Gly-96 and Arg-124 together coordinate phosphoenolpyruvate. The 3-phosphoshikimate site is built by Ser-167, Ser-168, Gln-169, Ser-196, Glu-311, and His-340. Gln-169 contributes to the phosphoenolpyruvate binding site. Glu-311 (proton acceptor) is an active-site residue. Phosphoenolpyruvate contacts are provided by Arg-344, Arg-385, and Lys-410. The tract at residues 426-450 is disordered; it reads GQGWGYPQPRSGQRARRATGQGSGG.

Belongs to the EPSP synthase family. As to quaternary structure, monomer.

The protein resides in the cytoplasm. It carries out the reaction 3-phosphoshikimate + phosphoenolpyruvate = 5-O-(1-carboxyvinyl)-3-phosphoshikimate + phosphate. The protein operates within metabolic intermediate biosynthesis; chorismate biosynthesis; chorismate from D-erythrose 4-phosphate and phosphoenolpyruvate: step 6/7. Catalyzes the transfer of the enolpyruvyl moiety of phosphoenolpyruvate (PEP) to the 5-hydroxyl of shikimate-3-phosphate (S3P) to produce enolpyruvyl shikimate-3-phosphate and inorganic phosphate. In Mycobacterium tuberculosis (strain ATCC 25177 / H37Ra), this protein is 3-phosphoshikimate 1-carboxyvinyltransferase.